The sequence spans 308 residues: D-alanine--D-alanine ligase (308 aa).

Residues 104 to 301 (KQIWQGSDLP…FDELCVAILD (198 aa)) enclose the ATP-grasp domain. ATP is bound at residue 130–185 (IAELGLPVIIKPVHEGSSVGMSKVEKAEDFAAAIEKATQHDAVVMAEKWITGREFT). Residues Asp255, Glu268, and Asn270 each coordinate Mg(2+).

Belongs to the D-alanine--D-alanine ligase family. Mg(2+) is required as a cofactor. It depends on Mn(2+) as a cofactor.

It is found in the cytoplasm. The enzyme catalyses 2 D-alanine + ATP = D-alanyl-D-alanine + ADP + phosphate + H(+). It participates in cell wall biogenesis; peptidoglycan biosynthesis. Its function is as follows. Cell wall formation. The protein is D-alanine--D-alanine ligase of Acinetobacter baumannii (strain AB307-0294).